A 387-amino-acid polypeptide reads, in one-letter code: 1-deoxy-D-xylulose 5-phosphate reductoisomerase (387 aa).

Residues threonine 10, glycine 11, serine 12, isoleucine 13, and asparagine 124 each coordinate NADPH. Lysine 125 is a 1-deoxy-D-xylulose 5-phosphate binding site. Glutamate 126 is a binding site for NADPH. Aspartate 150 is a binding site for Mn(2+). 1-deoxy-D-xylulose 5-phosphate is bound by residues serine 151, glutamate 152, serine 176, and histidine 199. Residue glutamate 152 coordinates Mn(2+). Glycine 205 is an NADPH binding site. Residues serine 212, asparagine 217, lysine 218, and glutamate 221 each coordinate 1-deoxy-D-xylulose 5-phosphate. Glutamate 221 contacts Mn(2+).

This sequence belongs to the DXR family. The cofactor is Mg(2+). Mn(2+) serves as cofactor.

The enzyme catalyses 2-C-methyl-D-erythritol 4-phosphate + NADP(+) = 1-deoxy-D-xylulose 5-phosphate + NADPH + H(+). It functions in the pathway isoprenoid biosynthesis; isopentenyl diphosphate biosynthesis via DXP pathway; isopentenyl diphosphate from 1-deoxy-D-xylulose 5-phosphate: step 1/6. Its function is as follows. Catalyzes the NADPH-dependent rearrangement and reduction of 1-deoxy-D-xylulose-5-phosphate (DXP) to 2-C-methyl-D-erythritol 4-phosphate (MEP). This is 1-deoxy-D-xylulose 5-phosphate reductoisomerase from Clostridium beijerinckii (strain ATCC 51743 / NCIMB 8052) (Clostridium acetobutylicum).